A 235-amino-acid polypeptide reads, in one-letter code: KNMITGAAQMDGAILVVSAADGPMPQTREHILLSKQVGVPHIVVFLNKEDQVDDLELVELVELEVRELLSNYDFPGDDIPILTGSALQALDAINNEPTLKKGDNKWVDKIYSLMESVDSYIPTPIRDVDKPFLMAIEDVFSITGRGTVATGKIDRGIVKVGETVDLVGLGDTKSTTVTGVEMFQKTLDEGVAGDNVGILLRGLQKGDIERGMVLSKPGTITPHNTFESELYILTK.

Residues Lys1–Ile125 form the tr-type G domain. Asn47–Asp50 contacts GTP.

It belongs to the TRAFAC class translation factor GTPase superfamily. Classic translation factor GTPase family. EF-Tu/EF-1A subfamily.

Its subcellular location is the plastid. It is found in the chloroplast. It catalyses the reaction GTP + H2O = GDP + phosphate + H(+). Its function is as follows. GTP hydrolase that promotes the GTP-dependent binding of aminoacyl-tRNA to the A-site of ribosomes during protein biosynthesis. The protein is Elongation factor Tu, chloroplastic (tufA) of Costaria costata (Five-ribbed kelp).